The primary structure comprises 251 residues: tRNA pseudouridine synthase A (251 aa).

D56 acts as the Nucleophile in catalysis. Y110 provides a ligand contact to substrate.

This sequence belongs to the tRNA pseudouridine synthase TruA family.

It catalyses the reaction uridine(38/39/40) in tRNA = pseudouridine(38/39/40) in tRNA. Formation of pseudouridine at positions 38, 39 and 40 in the anticodon stem and loop of transfer RNAs. The polypeptide is tRNA pseudouridine synthase A (Picrophilus torridus (strain ATCC 700027 / DSM 9790 / JCM 10055 / NBRC 100828 / KAW 2/3)).